The chain runs to 262 residues: DEIVLVGGSTRIPKIQQLVKEFFNGKEPSRGINPDEAVAYGAAVQAGVLSGDQDTGDLVLLDVCPLTLGIETVGGVMTKLIPRNTVVPTKKSQIFSTASDNQPTVTIKVYEGERPLTKDNHLLGTFDLTGIPPAPRGVPQIEVTFEIDVNGILRVTAEDKGTGNKNKITITNDQNRLTPEEIERMVNDAEKFAEEDKKLKERIDTRNELESYAYCLKNQIGDKEKLGGKLSSEDKETMEKAVEEKIEWLESHQDADIEDFKA.

ATP is bound at residue Gly-8–Arg-11. An interdomain linker region spans residues Gln-53–Val-63. Positions Cys-64–Thr-144 are substrate-binding (SBD). Position 91 is an N6-succinyllysine (Lys-91). Arg-136 bears the Omega-N-methylarginine mark. Thr-162 bears the O-AMP-threonine; alternate mark. Thr-162 is subject to Phosphothreonine; alternate. At Lys-229 the chain carries N6,N6,N6-trimethyllysine; by METTL21A; in vitro. Residue Lys-229 is modified to N6,N6-dimethyllysine; alternate. The residue at position 229 (Lys-229) is an N6-methyllysine; alternate. At Lys-235 the chain carries N6-methyllysine.

The protein belongs to the heat shock protein 70 family. As to quaternary structure, monomer and homooligomer; homooligomerization via the interdomain linker inactivates the chaperone activity and acts as a storage of HSPA5/BiP molecules. Interacts with DNAJC1 (via J domain). Component of an EIF2 complex at least composed of CELF1/CUGBP1, CALR, CALR3, EIF2S1, EIF2S2, HSP90B1 and HSPA5. Part of a large chaperone multiprotein complex comprising DNAJB11, HSP90B1, HSPA5, HYOU, PDIA2, PDIA4, PDIA6, PPIB, SDF2L1, UGGT1 and very small amounts of ERP29, but not, or at very low levels, CALR nor CANX. Interacts with TMEM132A and TRIM21. May form a complex with ERLEC1, OS9, SEL1L and SYVN1. Interacts with DNAJC10. Interacts with DNAJB9/ERdj4; leading to recruit HSPA5/BiP to ERN1/IRE1. Interacts with ERN1/IRE1 (via luminal domain); the interaction takes place following interaction with DNAJB9/ERdj4 and leads to inactivate ERN1/IRE1, the interaction also competitively inhibits ERN1 interaction with MANF. Interacts directly with MANF (via SAP domain); the interaction inhibits ATP binding to HSPA5/BiP and subsequent nucleotide exchange. Interacts with EIF2AK3/PERK (via luminal domain); interaction leads to inactivate EIF2AK3/PERK. Interacts with MX1. Interacts with METTL23. Interacts with CEMIP; the interaction induces calcium leakage from the endoplasmic reticulum and cell migration. Interacts with PCSK4 form; the interaction takes place in the endoplasmic reticulum. Interacts with CIPC. Interacts with CCDC88B (via C-terminus); the interaction opposes ERN1-mediated JNK activation, protecting against apoptosis. Interacts with INPP5K; necessary for INPP5K localization at the endoplasmic reticulum. Interacts with MANF; the interaction is direct. Interacts with LOXL2; leading to activate the ERN1/IRE1-XBP1 pathway of the unfolded protein response. Interacts with CLU under stressed condition; interaction increases CLU protein stability; facilitates its retrotranslocation and redistribution to the mitochondria; cooperatively suppress stress-induced apoptosis by stabilizing mitochondrial membrane integrity. Interacts with CCDC47. Interacts with CLN3. Interacts with ELAPOR1; may regulate the function of HSPA5 in apoptosis and cell proliferation. Interacts with CASP7. Interacts with ILDR2; the interaction stabilizes ILDR2 expression. Interacts with ADAM7. Post-translationally, in unstressed cells, AMPylation at Thr-162 by FICD inactivates the chaperome activity: AMPylated form is locked in a relatively inert state and only weakly stimulated by J domain-containing proteins. In response to endoplasmic reticulum stress, de-AMPylation by the same protein, FICD, restores the chaperone activity.

The protein localises to the endoplasmic reticulum lumen. Its subcellular location is the melanosome. It is found in the cytoplasm. It localises to the cell surface. The enzyme catalyses ATP + H2O = ADP + phosphate + H(+). Its activity is regulated as follows. The chaperone activity is regulated by ATP-induced allosteric coupling of the nucleotide-binding (NBD) and substrate-binding (SBD) domains. In the ADP-bound and nucleotide-free (apo) states, the two domains have little interaction. In contrast, in the ATP-bound state the two domains are tightly coupled, which results in drastically accelerated kinetics in both binding and release of polypeptide substrates. J domain-containing co-chaperones (DNAJB9/ERdj4 or DNAJC10/ERdj5) stimulate the ATPase activity and are required for efficient substrate recognition by HSPA5/BiP. Homooligomerization inactivates participating HSPA5/BiP protomers and probably act as reservoirs to store HSPA5/BiP molecules when they are not needed by the cell. Functionally, endoplasmic reticulum chaperone that plays a key role in protein folding and quality control in the endoplasmic reticulum lumen. Involved in the correct folding of proteins and degradation of misfolded proteins via its interaction with DNAJC10/ERdj5, probably to facilitate the release of DNAJC10/ERdj5 from its substrate. Acts as a key repressor of the EIF2AK3/PERK and ERN1/IRE1-mediated unfolded protein response (UPR). In the unstressed endoplasmic reticulum, recruited by DNAJB9/ERdj4 to the luminal region of ERN1/IRE1, leading to disrupt the dimerization of ERN1/IRE1, thereby inactivating ERN1/IRE1. Also binds and inactivates EIF2AK3/PERK in unstressed cells. Accumulation of misfolded protein in the endoplasmic reticulum causes release of HSPA5/BiP from ERN1/IRE1 and EIF2AK3/PERK, allowing their homodimerization and subsequent activation. Plays an auxiliary role in post-translational transport of small presecretory proteins across endoplasmic reticulum (ER). May function as an allosteric modulator for SEC61 channel-forming translocon complex, likely cooperating with SEC62 to enable the productive insertion of these precursors into SEC61 channel. Appears to specifically regulate translocation of precursors having inhibitory residues in their mature region that weaken channel gating. May also play a role in apoptosis and cell proliferation. In Sus scrofa (Pig), this protein is Endoplasmic reticulum chaperone BiP.